The following is a 343-amino-acid chain: Small ribosomal subunit biogenesis GTPase RsgA (343 aa).

Positions 116 to 275 constitute a CP-type G domain; sequence RGQLKPVAAN…LIDSPGIREF (160 aa). Residues 163–166 and 217–225 contribute to the GTP site; these read NKFD and GQSGVGKSS. Residues cysteine 299, cysteine 304, histidine 306, and cysteine 312 each coordinate Zn(2+).

The protein belongs to the TRAFAC class YlqF/YawG GTPase family. RsgA subfamily. In terms of assembly, monomer. Associates with 30S ribosomal subunit, binds 16S rRNA. The cofactor is Zn(2+).

It localises to the cytoplasm. In terms of biological role, one of several proteins that assist in the late maturation steps of the functional core of the 30S ribosomal subunit. Helps release RbfA from mature subunits. May play a role in the assembly of ribosomal proteins into the subunit. Circularly permuted GTPase that catalyzes slow GTP hydrolysis, GTPase activity is stimulated by the 30S ribosomal subunit. This is Small ribosomal subunit biogenesis GTPase RsgA from Pseudomonas fluorescens (strain SBW25).